Here is a 580-residue protein sequence, read N- to C-terminus: Glutamine--tRNA ligase (580 aa).

The short motif at Pro51–His61 is the 'HIGH' region element. ATP-binding positions include Glu52–Asn54 and His58–Ser64. The L-glutamine site is built by Asp84 and Tyr233. ATP-binding positions include Thr252 and Arg287–Leu288. The 'KMSKS' region signature appears at Ile294–Arg298.

This sequence belongs to the class-I aminoacyl-tRNA synthetase family. As to quaternary structure, monomer.

It is found in the cytoplasm. The catalysed reaction is tRNA(Gln) + L-glutamine + ATP = L-glutaminyl-tRNA(Gln) + AMP + diphosphate. This Ralstonia nicotianae (strain ATCC BAA-1114 / GMI1000) (Ralstonia solanacearum) protein is Glutamine--tRNA ligase.